The primary structure comprises 288 residues: Small ribosomal subunit protein uS2 (288 aa).

Positions 259–276 are enriched in low complexity; sequence EAAPAAEEAPAAEAEAAA. Positions 259–288 are disordered; that stretch reads EAAPAAEEAPAAEAEAAATDTSSESDKTEA.

The protein belongs to the universal ribosomal protein uS2 family.

This chain is Small ribosomal subunit protein uS2, found in Maricaulis maris (strain MCS10) (Caulobacter maris).